The primary structure comprises 587 residues: Aspartate--tRNA ligase (587 aa).

Residue E174 coordinates L-aspartate. The aspartate stretch occupies residues 198–201; sequence QITK. L-aspartate is bound at residue R220. ATP-binding positions include 220 to 222 and Q229; that span reads RDE. H443 is a binding site for L-aspartate. E477 serves as a coordination point for ATP. Residue R484 participates in L-aspartate binding. Position 529–532 (529–532) interacts with ATP; the sequence is GLDR.

Belongs to the class-II aminoacyl-tRNA synthetase family. Type 1 subfamily. Homodimer.

It localises to the cytoplasm. The enzyme catalyses tRNA(Asp) + L-aspartate + ATP = L-aspartyl-tRNA(Asp) + AMP + diphosphate. Catalyzes the attachment of L-aspartate to tRNA(Asp) in a two-step reaction: L-aspartate is first activated by ATP to form Asp-AMP and then transferred to the acceptor end of tRNA(Asp). The sequence is that of Aspartate--tRNA ligase from Streptococcus pneumoniae (strain Hungary19A-6).